The primary structure comprises 454 residues: uncharacterized protein (454 aa).

One can recognise an HNH domain in the interval 364–405 (CSRPGCDAPAYHSEVHHVTPWTTTHRTDINDLTLACGPDNRL). A disordered region spans residues 415–434 (NAKGDTEWLPPAHLDHGQPR).

This sequence belongs to the Rv1128c/1148c/1588c/1702c/1945/3466 family.

This is an uncharacterized protein from Mycobacterium tuberculosis (strain CDC 1551 / Oshkosh).